The primary structure comprises 345 residues: uncharacterized protein (345 aa).

Belongs to the methyltransferase superfamily.

This is an uncharacterized protein from Streptomyces fradiae (Streptomyces roseoflavus).